The sequence spans 306 residues: RNA pseudouridylate synthase domain-containing protein 1 (306 aa).

Position 1 is an N-acetylmethionine (methionine 1). The active site involves aspartate 67. The segment at 255-290 (RTDPDPDPMSGGPRPCSPSTPQPRPGRPPPETEAQR) is disordered. The span at 269–285 (PCSPSTPQPRPGRPPPE) shows a compositional bias: pro residues.

This sequence belongs to the pseudouridine synthase RluA family.

This is RNA pseudouridylate synthase domain-containing protein 1 (Rpusd1) from Mus musculus (Mouse).